A 494-amino-acid polypeptide reads, in one-letter code: Glutamyl-tRNA(Gln) amidotransferase subunit A (494 aa).

Catalysis depends on charge relay system residues Lys81 and Ser156. Ser180 acts as the Acyl-ester intermediate in catalysis.

Belongs to the amidase family. GatA subfamily. As to quaternary structure, heterotrimer of A, B and C subunits.

The enzyme catalyses L-glutamyl-tRNA(Gln) + L-glutamine + ATP + H2O = L-glutaminyl-tRNA(Gln) + L-glutamate + ADP + phosphate + H(+). Functionally, allows the formation of correctly charged Gln-tRNA(Gln) through the transamidation of misacylated Glu-tRNA(Gln) in organisms which lack glutaminyl-tRNA synthetase. The reaction takes place in the presence of glutamine and ATP through an activated gamma-phospho-Glu-tRNA(Gln). In Mycolicibacterium gilvum (strain PYR-GCK) (Mycobacterium gilvum (strain PYR-GCK)), this protein is Glutamyl-tRNA(Gln) amidotransferase subunit A.